The following is a 372-amino-acid chain: MTSIEPTHTGKKVIVGMSGGVDSSVSAYLLMQQGYQVEGLFMKNWEEDDNDEYCAAAEDLKDAQAVCDKLGIKLHTVNFAAEYWDNVFEYFLAEYKAGRTPNPDIMCNKEIKFKAFLDFADDILDADYIAMGHYVRRRDNADGTTQMLRGVDNNKDQSYFLYTLSHEQVARSLFPVGELEKHEVREIAKKMGLITHDKKDSTGICFIGERKFTEFLGNYLPAQPGNIETAEGEIIGKHQGLMYQTLGQRKGLGIGGMKNSNDDPWYVVDKDLKRNVLVVGQGGHHPRLMSNGMLVNQLHWVDRKGPAEGSQIVVKTRYRQQDIPCTLTYLDDNTLKVVFDEPVAAVTPGQSAVFYDGEVCLGGGIIDQLIRG.

Residues 16 to 23 and Met-42 contribute to the ATP site; that span reads GMSGGVDS. Residues 102-104 are interaction with target base in tRNA; that stretch reads NPD. Cys-107 serves as the catalytic Nucleophile. Cys-107 and Cys-205 are joined by a disulfide. Gly-132 serves as a coordination point for ATP. Residues 155-157 form an interaction with tRNA region; it reads KDQ. The active-site Cysteine persulfide intermediate is Cys-205. The tract at residues 317-318 is interaction with tRNA; it reads RY.

This sequence belongs to the MnmA/TRMU family.

It is found in the cytoplasm. The catalysed reaction is S-sulfanyl-L-cysteinyl-[protein] + uridine(34) in tRNA + AH2 + ATP = 2-thiouridine(34) in tRNA + L-cysteinyl-[protein] + A + AMP + diphosphate + H(+). In terms of biological role, catalyzes the 2-thiolation of uridine at the wobble position (U34) of tRNA, leading to the formation of s(2)U34. The protein is tRNA-specific 2-thiouridylase MnmA of Shewanella sp. (strain ANA-3).